The primary structure comprises 644 residues: 1-deoxy-D-xylulose-5-phosphate synthase (644 aa).

Thiamine diphosphate is bound by residues His-78 and 120–122; that span reads GHA. Asp-149 is a Mg(2+) binding site. Residues 150–151, Asn-178, and Glu-373 each bind thiamine diphosphate; that span reads AA. Asn-178 is a binding site for Mg(2+).

Belongs to the transketolase family. DXPS subfamily. Homodimer. Requires Mg(2+) as cofactor. Thiamine diphosphate serves as cofactor.

The enzyme catalyses D-glyceraldehyde 3-phosphate + pyruvate + H(+) = 1-deoxy-D-xylulose 5-phosphate + CO2. It participates in metabolic intermediate biosynthesis; 1-deoxy-D-xylulose 5-phosphate biosynthesis; 1-deoxy-D-xylulose 5-phosphate from D-glyceraldehyde 3-phosphate and pyruvate: step 1/1. Functionally, catalyzes the acyloin condensation reaction between C atoms 2 and 3 of pyruvate and glyceraldehyde 3-phosphate to yield 1-deoxy-D-xylulose-5-phosphate (DXP). In Chlamydia abortus (strain DSM 27085 / S26/3) (Chlamydophila abortus), this protein is 1-deoxy-D-xylulose-5-phosphate synthase.